The chain runs to 245 residues: Fibroblast growth factor 13 (245 aa).

The tract at residues 1–36 is disordered; that stretch reads MAAAIASSLIRQKRQAREREKSNACKCVSSPSKGKT. The segment at 1–62 is mediates targeting to the nucleus; the sequence is MAAAIASSLI…GSKKRRRRRP (62 aa). A mediates interaction with sodium channels region spans residues 67-201; it reads KGIVTKLYSR…AHFLPKPLKV (135 aa). Ser-208 carries the post-translational modification Phosphoserine. A disordered region spans residues 213–245; the sequence is TEFSRSGSGTPTKSRSVSGVLNGGKSMSHNEST. Positions 215 to 245 are enriched in polar residues; that stretch reads FSRSGSGTPTKSRSVSGVLNGGKSMSHNEST.

Belongs to the heparin-binding growth factors family. Interacts with SCN8A; regulates SCN8A activity. Interacts with SCN1A; may regulate SCN1A activity. Interacts with SCN5A; the interaction is direct and may regulate SNC5A density at membranes and function. May also interact with SCN2A and SCN11A. Interacts with MAPK8IP2; may regulate the MAPK8IP2 scaffolding activity. May be phosphorylated. As to expression, ubiquitously expressed. Predominantly expressed in the nervous system.

The protein resides in the nucleus. The protein localises to the cytoplasm. It is found in the cell projection. It localises to the filopodium. Its subcellular location is the growth cone. The protein resides in the dendrite. The protein localises to the cell membrane. It is found in the sarcolemma. In terms of biological role, microtubule-binding protein which directly binds tubulin and is involved in both polymerization and stabilization of microtubules. Through its action on microtubules, may participate in the refinement of axons by negatively regulating axonal and leading processes branching. Plays a crucial role in neuron polarization and migration in the cerebral cortex and the hippocampus. Regulates voltage-gated sodium channel transport and function. May also play a role in MAPK signaling. Required for the development of axonal initial segment-targeting inhibitory GABAergic synapses made by chandelier neurons. The protein is Fibroblast growth factor 13 of Homo sapiens (Human).